A 537-amino-acid polypeptide reads, in one-letter code: Glutamate--tRNA ligase (537 aa).

Residues Pro9–Gly19 carry the 'HIGH' region motif. Zn(2+) contacts are provided by Cys125, Cys127, Cys152, and Glu154. The 'KMSKS' region signature appears at Lys270–Arg274. Lys273 is an ATP binding site.

This sequence belongs to the class-I aminoacyl-tRNA synthetase family. Glutamate--tRNA ligase type 1 subfamily. Monomer. Zn(2+) is required as a cofactor.

Its subcellular location is the cytoplasm. It carries out the reaction tRNA(Glu) + L-glutamate + ATP = L-glutamyl-tRNA(Glu) + AMP + diphosphate. Catalyzes the attachment of glutamate to tRNA(Glu) in a two-step reaction: glutamate is first activated by ATP to form Glu-AMP and then transferred to the acceptor end of tRNA(Glu). This is Glutamate--tRNA ligase from Treponema pallidum (strain Nichols).